The following is a 65-amino-acid chain: Large ribosomal subunit protein uL29 (65 aa).

This sequence belongs to the universal ribosomal protein uL29 family.

The polypeptide is Large ribosomal subunit protein uL29 (Acidovorax ebreus (strain TPSY) (Diaphorobacter sp. (strain TPSY))).